The following is a 397-amino-acid chain: Keratinocyte differentiation factor 1 (397 aa).

The span at 1-16 (MPRPGQPRPSSGPPRL) shows a compositional bias: pro residues. Disordered stretches follow at residues 1-67 (MPRP…SAEP), 130-158 (EHNG…MGSS), and 192-214 (LAEP…RGSE). A compositionally biased stretch (basic and acidic residues) spans 44–55 (RPDPKDPGHHGP). Residues 201-211 (SLPSTFTNSPR) show a composition bias toward polar residues. Ser-218 carries the post-translational modification Phosphoserine. 2 disordered regions span residues 304–339 (ISTR…TMLG) and 361–392 (ARKL…GAPL). Low complexity predominate over residues 321–330 (ARSTAPAAAP). Polar residues predominate over residues 375-388 (SQDSSFQGTDTDSS).

The protein resides in the cytoplasm. It is found in the cell junction. Functionally, plays a role in the regulation of the epidermis formation during early development. Required both as an inhibitor of basal cell proliferation and a promoter of differentiation of basal progenitor cell progeny. The sequence is that of Keratinocyte differentiation factor 1 (Kdf1) from Mus musculus (Mouse).